Reading from the N-terminus, the 331-residue chain is Anthranilate phosphoribosyltransferase (331 aa).

Residues glycine 81, 84-85 (GD), serine 89, 91-94 (NCST), 109-117 (KHGNRAVSS), and serine 121 contribute to the 5-phospho-alpha-D-ribose 1-diphosphate site. Anthranilate is bound at residue glycine 81. Serine 93 is a binding site for Mg(2+). Asparagine 112 provides a ligand contact to anthranilate. Residue arginine 167 participates in anthranilate binding. Residues aspartate 226 and glutamate 227 each contribute to the Mg(2+) site.

The protein belongs to the anthranilate phosphoribosyltransferase family. In terms of assembly, homodimer. Mg(2+) serves as cofactor.

The catalysed reaction is N-(5-phospho-beta-D-ribosyl)anthranilate + diphosphate = 5-phospho-alpha-D-ribose 1-diphosphate + anthranilate. The protein operates within amino-acid biosynthesis; L-tryptophan biosynthesis; L-tryptophan from chorismate: step 2/5. In terms of biological role, catalyzes the transfer of the phosphoribosyl group of 5-phosphorylribose-1-pyrophosphate (PRPP) to anthranilate to yield N-(5'-phosphoribosyl)-anthranilate (PRA). The polypeptide is Anthranilate phosphoribosyltransferase (Oleidesulfovibrio alaskensis (strain ATCC BAA-1058 / DSM 17464 / G20) (Desulfovibrio alaskensis)).